A 239-amino-acid polypeptide reads, in one-letter code: Putative 3-methyladenine DNA glycosylase (239 aa).

It belongs to the DNA glycosylase MPG family.

This is Putative 3-methyladenine DNA glycosylase from Pseudomonas aeruginosa (strain UCBPP-PA14).